A 352-amino-acid polypeptide reads, in one-letter code: MLNVREVQKLKASNKRLWSLSWNHKGSVLISSGEDRVIKLWAKCNDQLWGSSFSLPEAHKKSIRCVTWSPCGTYIASASFDGTVTIWKISEAHSAPEMEALVSLEGHTSEVKCVAWCPSGHLIATCGRDKSVWLWEFDDEEDVQCVSVLQPHSQDVKSVAWHPHGEVLVSTSYDNKINVYREELDDWTVFAQLSGHDSTVWKAEFSPSGDILASCSDDLCVKLWSWEGVCGKSSSWMCIATLSGYHTRTIFDLNWSPDSQLLASCGSDNRLCIYKMPANGLTHIGGKPCFEEPPVLWGHVPNAHSEDVNCVRWKPGNITDISHSESISNCHLFLTTASDDGYIKFWSIEYEL.

WD repeat units lie at residues 12–51, 58–97, 106–145, 151–190, 195–234, 245–284, and 303–352; these read ASNKRLWSLSWNHKGSVLISSGEDRVIKLWAKCNDQLWGS, AHKKSIRCVTWSPCGTYIASASFDGTVTIWKISEAHSAPE, GHTSEVKCVAWCPSGHLIATCGRDKSVWLWEFDDEEDVQC, PHSQDVKSVAWHPHGEVLVSTSYDNKINVYREELDDWTVF, GHDSTVWKAEFSPSGDILASCSDDLCVKLWSWEGVCGKSS, YHTRTIFDLNWSPDSQLLASCGSDNRLCIYKMPANGLTHI, and AHSE…EYEL.

This sequence belongs to the WD repeat CIA1 family.

Essential component of the cytosolic iron-sulfur (Fe/S) protein assembly machinery. Required for the maturation of extramitochondrial Fe/S proteins. This chain is Probable cytosolic iron-sulfur protein assembly protein CIAO1 homolog, found in Schistosoma japonicum (Blood fluke).